The chain runs to 490 residues: Ketol-acid reductoisomerase (NADP(+)) (490 aa).

Positions 16 to 207 constitute a KARI N-terminal Rossmann domain; it reads INKCRFMKKE…GGHRAGVLES (192 aa). Residues 44–47, K67, S77, and 107–109 each bind NADP(+); these read CGAQ and DKQ. Residue H131 is part of the active site. G157 serves as a coordination point for NADP(+). 2 KARI C-terminal knotted domains span residues 208–343 and 344–483; these read SFIA…TAPV and YNEK…MKKM. 4 residues coordinate Mg(2+): D216, E220, E388, and E392. S413 provides a ligand contact to substrate.

Belongs to the ketol-acid reductoisomerase family. Requires Mg(2+) as cofactor.

The catalysed reaction is (2R)-2,3-dihydroxy-3-methylbutanoate + NADP(+) = (2S)-2-acetolactate + NADPH + H(+). It catalyses the reaction (2R,3R)-2,3-dihydroxy-3-methylpentanoate + NADP(+) = (S)-2-ethyl-2-hydroxy-3-oxobutanoate + NADPH + H(+). The protein operates within amino-acid biosynthesis; L-isoleucine biosynthesis; L-isoleucine from 2-oxobutanoate: step 2/4. Its pathway is amino-acid biosynthesis; L-valine biosynthesis; L-valine from pyruvate: step 2/4. Involved in the biosynthesis of branched-chain amino acids (BCAA). Catalyzes an alkyl-migration followed by a ketol-acid reduction of (S)-2-acetolactate (S2AL) to yield (R)-2,3-dihydroxy-isovalerate. In the isomerase reaction, S2AL is rearranged via a Mg-dependent methyl migration to produce 3-hydroxy-3-methyl-2-ketobutyrate (HMKB). In the reductase reaction, this 2-ketoacid undergoes a metal-dependent reduction by NADPH to yield (R)-2,3-dihydroxy-isovalerate. The polypeptide is Ketol-acid reductoisomerase (NADP(+)) (Buchnera aphidicola subsp. Acyrthosiphon pisum (strain 5A)).